The sequence spans 1305 residues: RNA-directed RNA polymerase (1305 aa).

One can recognise a RdRp catalytic domain in the interval 563 to 814; sequence IIVGDLEATG…KTLIAPFSVE (252 aa).

The protein belongs to the reoviridae RNA-directed RNA polymerase family.

The enzyme catalyses RNA(n) + a ribonucleoside 5'-triphosphate = RNA(n+1) + diphosphate. The sequence is that of RNA-directed RNA polymerase (Segment-1) from African horse sickness virus (AHSV).